The primary structure comprises 321 residues: Anthranilate phosphoribosyltransferase (321 aa).

Residues Gly-72, 75–76 (GD), Thr-80, 82–85 (NVST), 99–107 (KHGNVSVTS), and Ser-111 contribute to the 5-phospho-alpha-D-ribose 1-diphosphate site. An anthranilate-binding site is contributed by Gly-72. Ser-84 contacts Mg(2+). Asn-102 is an anthranilate binding site. Anthranilate is bound at residue Arg-157. The Mg(2+) site is built by Asp-216 and Glu-217.

This sequence belongs to the anthranilate phosphoribosyltransferase family. As to quaternary structure, homodimer. Requires Mg(2+) as cofactor.

It catalyses the reaction N-(5-phospho-beta-D-ribosyl)anthranilate + diphosphate = 5-phospho-alpha-D-ribose 1-diphosphate + anthranilate. It functions in the pathway amino-acid biosynthesis; L-tryptophan biosynthesis; L-tryptophan from chorismate: step 2/5. Functionally, catalyzes the transfer of the phosphoribosyl group of 5-phosphorylribose-1-pyrophosphate (PRPP) to anthranilate to yield N-(5'-phosphoribosyl)-anthranilate (PRA). The chain is Anthranilate phosphoribosyltransferase from Methanococcus vannielii (strain ATCC 35089 / DSM 1224 / JCM 13029 / OCM 148 / SB).